The sequence spans 369 residues: Protein RecA (369 aa).

A compositionally biased stretch (basic and acidic residues) spans 1–10; sequence MARTTDDSKK. A disordered region spans residues 1-20; that stretch reads MARTTDDSKKAAPAAGTADE. 82 to 89 provides a ligand contact to ATP; sequence GPESSGKT. The segment at 350-369 is disordered; it reads PAAAVAAPDEGDDDLGDEEV. Over residues 358–369 the composition is skewed to acidic residues; that stretch reads DEGDDDLGDEEV.

This sequence belongs to the RecA family.

It is found in the cytoplasm. Its function is as follows. Can catalyze the hydrolysis of ATP in the presence of single-stranded DNA, the ATP-dependent uptake of single-stranded DNA by duplex DNA, and the ATP-dependent hybridization of homologous single-stranded DNAs. It interacts with LexA causing its activation and leading to its autocatalytic cleavage. The sequence is that of Protein RecA from Gloeobacter violaceus (strain ATCC 29082 / PCC 7421).